We begin with the raw amino-acid sequence, 179 residues long: Large ribosomal subunit protein uL5 (179 aa).

Belongs to the universal ribosomal protein uL5 family. As to quaternary structure, part of the 50S ribosomal subunit; part of the 5S rRNA/L5/L18/L25 subcomplex. Contacts the 5S rRNA and the P site tRNA. Forms a bridge to the 30S subunit in the 70S ribosome.

Functionally, this is one of the proteins that bind and probably mediate the attachment of the 5S RNA into the large ribosomal subunit, where it forms part of the central protuberance. In the 70S ribosome it contacts protein S13 of the 30S subunit (bridge B1b), connecting the 2 subunits; this bridge is implicated in subunit movement. Contacts the P site tRNA; the 5S rRNA and some of its associated proteins might help stabilize positioning of ribosome-bound tRNAs. The chain is Large ribosomal subunit protein uL5 from Enterococcus faecalis (strain ATCC 700802 / V583).